The primary structure comprises 484 residues: Acetyl-coenzyme A carboxylase carboxyl transferase subunit beta, chloroplastic (484 aa).

Positions 223 to 484 (LWIQCDNCYG…LHAFFPLNKN (262 aa)) constitute a CoA carboxyltransferase N-terminal domain. Zn(2+) is bound by residues Cys227, Cys230, Cys243, and Cys246. The C4-type zinc finger occupies 227-246 (CDNCYGLMYKKVKMNVCEQC).

This sequence belongs to the AccD/PCCB family. In terms of assembly, acetyl-CoA carboxylase is a heterohexamer composed of biotin carboxyl carrier protein, biotin carboxylase and 2 subunits each of ACCase subunit alpha and ACCase plastid-coded subunit beta (accD). It depends on Zn(2+) as a cofactor.

It is found in the plastid. Its subcellular location is the chloroplast stroma. It catalyses the reaction N(6)-carboxybiotinyl-L-lysyl-[protein] + acetyl-CoA = N(6)-biotinyl-L-lysyl-[protein] + malonyl-CoA. The protein operates within lipid metabolism; malonyl-CoA biosynthesis; malonyl-CoA from acetyl-CoA: step 1/1. Its function is as follows. Component of the acetyl coenzyme A carboxylase (ACC) complex. Biotin carboxylase (BC) catalyzes the carboxylation of biotin on its carrier protein (BCCP) and then the CO(2) group is transferred by the transcarboxylase to acetyl-CoA to form malonyl-CoA. The sequence is that of Acetyl-coenzyme A carboxylase carboxyl transferase subunit beta, chloroplastic from Olimarabidopsis pumila (Dwarf rocket).